We begin with the raw amino-acid sequence, 265 residues long: Hydroxyethylthiazole kinase (265 aa).

Residue M50 coordinates substrate. Positions 125 and 171 each coordinate ATP. G198 is a binding site for substrate.

The protein belongs to the Thz kinase family. Requires Mg(2+) as cofactor.

The catalysed reaction is 5-(2-hydroxyethyl)-4-methylthiazole + ATP = 4-methyl-5-(2-phosphooxyethyl)-thiazole + ADP + H(+). It functions in the pathway cofactor biosynthesis; thiamine diphosphate biosynthesis; 4-methyl-5-(2-phosphoethyl)-thiazole from 5-(2-hydroxyethyl)-4-methylthiazole: step 1/1. Catalyzes the phosphorylation of the hydroxyl group of 4-methyl-5-beta-hydroxyethylthiazole (THZ). The sequence is that of Hydroxyethylthiazole kinase from Salmonella paratyphi B (strain ATCC BAA-1250 / SPB7).